The primary structure comprises 701 residues: Low-density lipoprotein receptor-related protein 12 (701 aa).

Over 1–334 (GKSEEPNCAC…ENCPVIVPTR (334 aa)) the chain is Extracellular. 2 consecutive LDL-receptor class A domains span residues 7-43 (NCAC…EICA) and 56-97 (PCAY…IDCD). 7 cysteine pairs are disulfide-bonded: Cys8–Cys20, Cys15–Cys33, Cys27–Cys42, Cys57–Cys74, Cys64–Cys87, Cys81–Cys96, and Cys101–Cys127. One can recognise a CUB domain in the interval 101–214 (CGQWLKYFYG…RGFNATYQVD (114 aa)). Residues Asn126 and Asn208 are each glycosylated (N-linked (GlcNAc...) asparagine). LDL-receptor class A domains are found at residues 216–253 (FCLP…INCT), 254–291 (MCQK…KNCF), and 292–328 (FCQP…ENCP). Intrachain disulfides connect Cys217–Cys230, Cys224–Cys243, Cys237–Cys252, Cys255–Cys268, Cys262–Cys281, Cys275–Cys290, Cys293–Cys305, Cys300–Cys318, and Cys312–Cys327. An N-linked (GlcNAc...) asparagine glycan is attached at Asn251. The N-linked (GlcNAc...) asparagine glycan is linked to Asn283. Residues 335–355 (VITAAVIGSLICGLLLVIALG) form a helical membrane-spanning segment. Over 356-701 (CTCKLYSLRM…TSDDEALLLC (346 aa)) the chain is Cytoplasmic. Disordered regions lie at residues 465–520 (ADGD…LPQK), 535–565 (ASSS…SPAR), 590–612 (SSVS…REDD), and 643–665 (DQGQ…SNRD). 2 stretches are compositionally biased toward polar residues: residues 590–599 (SSVSQNQSPL) and 643–656 (DQGQ…SATN).

The protein belongs to the LDLR family. May interact with RACK1, ZFYVE9 and NMRK2.

It is found in the membrane. Its subcellular location is the coated pit. Its function is as follows. Probable receptor, which may be involved in the internalization of lipophilic molecules and/or signal transduction. May act as a tumor suppressor. This chain is Low-density lipoprotein receptor-related protein 12 (LRP12), found in Macaca fascicularis (Crab-eating macaque).